A 503-amino-acid polypeptide reads, in one-letter code: Maturase K (503 aa).

This sequence belongs to the intron maturase 2 family. MatK subfamily.

The protein localises to the plastid. Its subcellular location is the chloroplast. Usually encoded in the trnK tRNA gene intron. Probably assists in splicing its own and other chloroplast group II introns. In Psilotum nudum (Whisk fern), this protein is Maturase K.